The following is a 398-amino-acid chain: 8-amino-7-oxononanoate synthase (398 aa).

Residue Arg-26 participates in substrate binding. 113 to 114 (GF) contacts pyridoxal 5'-phosphate. Position 138 (His-138) interacts with substrate. Pyridoxal 5'-phosphate-binding residues include Ser-181, His-209, and Thr-238. The residue at position 241 (Lys-241) is an N6-(pyridoxal phosphate)lysine. Thr-355 lines the substrate pocket.

Belongs to the class-II pyridoxal-phosphate-dependent aminotransferase family. BioF subfamily. As to quaternary structure, homodimer. It depends on pyridoxal 5'-phosphate as a cofactor.

The catalysed reaction is 6-carboxyhexanoyl-[ACP] + L-alanine + H(+) = (8S)-8-amino-7-oxononanoate + holo-[ACP] + CO2. It participates in cofactor biosynthesis; biotin biosynthesis. Catalyzes the decarboxylative condensation of pimeloyl-[acyl-carrier protein] and L-alanine to produce 8-amino-7-oxononanoate (AON), [acyl-carrier protein], and carbon dioxide. The chain is 8-amino-7-oxononanoate synthase from Aeromonas salmonicida (strain A449).